Consider the following 351-residue polypeptide: UDP-N-acetylglucosamine--N-acetylmuramyl-(pentapeptide) pyrophosphoryl-undecaprenol N-acetylglucosamine transferase (351 aa).

Residues 12–14, Asn-124, Arg-160, Ser-188, Ile-239, 258–263, and Gln-283 contribute to the UDP-N-acetyl-alpha-D-glucosamine site; these read TGG and ALTVCE.

It belongs to the glycosyltransferase 28 family. MurG subfamily.

The protein localises to the cell inner membrane. It catalyses the reaction di-trans,octa-cis-undecaprenyl diphospho-N-acetyl-alpha-D-muramoyl-L-alanyl-D-glutamyl-meso-2,6-diaminopimeloyl-D-alanyl-D-alanine + UDP-N-acetyl-alpha-D-glucosamine = di-trans,octa-cis-undecaprenyl diphospho-[N-acetyl-alpha-D-glucosaminyl-(1-&gt;4)]-N-acetyl-alpha-D-muramoyl-L-alanyl-D-glutamyl-meso-2,6-diaminopimeloyl-D-alanyl-D-alanine + UDP + H(+). It functions in the pathway cell wall biogenesis; peptidoglycan biosynthesis. Cell wall formation. Catalyzes the transfer of a GlcNAc subunit on undecaprenyl-pyrophosphoryl-MurNAc-pentapeptide (lipid intermediate I) to form undecaprenyl-pyrophosphoryl-MurNAc-(pentapeptide)GlcNAc (lipid intermediate II). This Glaesserella parasuis serovar 5 (strain SH0165) (Haemophilus parasuis) protein is UDP-N-acetylglucosamine--N-acetylmuramyl-(pentapeptide) pyrophosphoryl-undecaprenol N-acetylglucosamine transferase.